A 304-amino-acid polypeptide reads, in one-letter code: Quorum-quenching protein AidA (304 aa).

This sequence belongs to the AB hydrolase superfamily.

Involved in quorum quenching (QQ). Inhibits motility and biofilm formation. Could contribute in bacterial competition, as it is capable of hydrolyzing the signaling molecules that mediate interspecies communication. This Acinetobacter baumannii (strain MDR-ZJ06) protein is Quorum-quenching protein AidA.